Reading from the N-terminus, the 541-residue chain is Calcium-dependent protein kinase 25 (541 aa).

The span at 1–11 (MGQCCTGGGKA) shows a compositional bias: gly residues. Residues 1–74 (MGQCCTGGGK…AGPIGEVLER (74 aa)) are disordered. Gly2 is lipidated: N-myristoyl glycine. The span at 38–67 (AKQQPCSPAAKAAATEAAAAASSSKKPAGP) shows a compositional bias: low complexity. In terms of domain architecture, Protein kinase spans 83-341 (YSIGKELGRG…AFQVLNHPWI (259 aa)). ATP contacts are provided by residues 89–97 (LGRGQFGVT) and Lys112. Asp207 functions as the Proton acceptor in the catalytic mechanism. The segment at 347–377 (APDVPLDNVVLNRLKQFRAMNQFKKAALRII) is autoinhibitory domain. EF-hand domains follow at residues 384–419 (EEIK…QGTK), 420–455 (FSDN…MNKM), 456–491 (DREE…QGLY), and 493–526 (ANEI…GSGC). Residues Asp397, Asp399, Ser401, Thr403, Glu408, Asp433, Asp435, Asn437, Glu444, Asp469, Asp471, Ser473, Tyr475, Glu480, Asp504, Asn506, Asp508, Arg510, and Glu515 each coordinate Ca(2+).

It belongs to the protein kinase superfamily. Ser/Thr protein kinase family. CDPK subfamily. In terms of tissue distribution, specifically expressed in heading panicles, spikelets and mature pollen grains. Not expressed in vegetative tissues.

The protein localises to the membrane. The catalysed reaction is L-seryl-[protein] + ATP = O-phospho-L-seryl-[protein] + ADP + H(+). It catalyses the reaction L-threonyl-[protein] + ATP = O-phospho-L-threonyl-[protein] + ADP + H(+). Its activity is regulated as follows. Activated by calcium. Autophosphorylation may play an important role in the regulation of the kinase activity. May play a role in signal transduction pathways that involve calcium as a second messenger. This is Calcium-dependent protein kinase 25 from Oryza sativa subsp. japonica (Rice).